The chain runs to 138 residues: Larval cuticle protein 1 (138 aa).

The first 16 residues, 1 to 16 (MFKFVMVFAVLGVAAA), serve as a signal peptide directing secretion. Residues 49–110 (ADGFDADLLV…PVGAVLPTPP (62 aa)) enclose the Chitin-binding type R&amp;R domain.

Component of the larval cuticle. This chain is Larval cuticle protein 1 (Lcp1), found in Drosophila miranda (Fruit fly).